A 303-amino-acid polypeptide reads, in one-letter code: Cell wall mannoprotein HSP150 (303 aa).

A signal peptide spans 1-18 (MQYKKTLVASALAATTLA). The propeptide occupies 19-72 (AYAPSEPWSTLTPTATYSGGVTDYASTFGIAVQPISTTSSASSAATTASSKAKR). PIR1/2/3 repeat units lie at residues 71–89 (KRAA…TTTA) and 97–113 (AAAV…ATTK). The PIR1/2/3 3; degenerate repeat unit spans residues 114-134 (TTAAASLKLVMVKIQATTKTT). PIR1/2/3 repeat units follow at residues 135–153 (AAAV…TKTT), 154–171 (AAAV…TTKT), and 172–190 (TQAA…SATS).

It belongs to the PIR protein family. Covalently linked to beta-1,3-glucan of the inner cell wall layer via an alkali-sensitive ester linkage between the gamma-carboxyl group of glutamic acids, arising from specific glutamines within the PIR1/2/3 repeats, and hydroxyl groups of glucoses of beta-1,3-glucan chains. Post-translationally, the propeptide is cleaved off in the late Golgi. While both peptides are secreted, only a fraction of the mature glycoprotein is incorporated into the cell wall. In terms of processing, O-glycosylated. Extensively O-mannosylated.

It localises to the secreted. The protein resides in the cell wall. Its function is as follows. Component of the outer cell wall layer. Required for stability of the cell wall and for optimal growth. Required for resistance against several antifungal and cell wall-perturbing agents and for tolerance to heat shock. This is Cell wall mannoprotein HSP150 (HSP150) from Saccharomyces cerevisiae (strain AWRI1631) (Baker's yeast).